Here is a 278-residue protein sequence, read N- to C-terminus: 3-methyl-2-oxobutanoate hydroxymethyltransferase 1 (278 aa).

Residues Asp-49 and Asp-88 each contribute to the Mg(2+) site. Residues 49–50 (DS), Asp-88, and Lys-118 each bind 3-methyl-2-oxobutanoate. Glu-120 contacts Mg(2+). Glu-187 acts as the Proton acceptor in catalysis.

It belongs to the PanB family. As to quaternary structure, homodecamer; pentamer of dimers. The cofactor is Mg(2+).

The protein resides in the cytoplasm. It carries out the reaction 3-methyl-2-oxobutanoate + (6R)-5,10-methylene-5,6,7,8-tetrahydrofolate + H2O = 2-dehydropantoate + (6S)-5,6,7,8-tetrahydrofolate. The protein operates within cofactor biosynthesis; (R)-pantothenate biosynthesis; (R)-pantoate from 3-methyl-2-oxobutanoate: step 1/2. Catalyzes the reversible reaction in which hydroxymethyl group from 5,10-methylenetetrahydrofolate is transferred onto alpha-ketoisovalerate to form ketopantoate. This is 3-methyl-2-oxobutanoate hydroxymethyltransferase 1 from Hahella chejuensis (strain KCTC 2396).